Consider the following 191-residue polypeptide: Holliday junction branch migration complex subunit RuvA (191 aa).

Positions 1 to 64 (MIGKLTGTLL…EDAQLLYGFA (64 aa)) are domain I. The interval 65 to 140 (TAPERQAFRA…KLGADLGASH (76 aa)) is domain II. The segment at 140-142 (HGP) is flexible linker. Residues 143-191 (AVSGAQADILQALLALGYNDKEAAAALKALPAQVEVSDGIKWALKALTK) form a domain III region.

This sequence belongs to the RuvA family. In terms of assembly, homotetramer. Forms an RuvA(8)-RuvB(12)-Holliday junction (HJ) complex. HJ DNA is sandwiched between 2 RuvA tetramers; dsDNA enters through RuvA and exits via RuvB. An RuvB hexamer assembles on each DNA strand where it exits the tetramer. Each RuvB hexamer is contacted by two RuvA subunits (via domain III) on 2 adjacent RuvB subunits; this complex drives branch migration. In the full resolvosome a probable DNA-RuvA(4)-RuvB(12)-RuvC(2) complex forms which resolves the HJ.

The protein resides in the cytoplasm. Its function is as follows. The RuvA-RuvB-RuvC complex processes Holliday junction (HJ) DNA during genetic recombination and DNA repair, while the RuvA-RuvB complex plays an important role in the rescue of blocked DNA replication forks via replication fork reversal (RFR). RuvA specifically binds to HJ cruciform DNA, conferring on it an open structure. The RuvB hexamer acts as an ATP-dependent pump, pulling dsDNA into and through the RuvAB complex. HJ branch migration allows RuvC to scan DNA until it finds its consensus sequence, where it cleaves and resolves the cruciform DNA. In Verminephrobacter eiseniae (strain EF01-2), this protein is Holliday junction branch migration complex subunit RuvA.